The sequence spans 117 residues: Gamma-aminobutyric acid receptor-associated protein-like 3 (117 aa).

The segment at methionine 1–arginine 22 is interaction with beta-tubulin. Residues alanine 36–isoleucine 68 form an interaction with GABRG2 region. Residue glycine 116 is the site of Phosphatidylethanolamine amidated glycine attachment. A propeptide (removed in mature form) is located at residue lysine 117.

Belongs to the ATG8 family. In terms of assembly, interacts with GABRG2 and beta-tubulin. Post-translationally, the precursor molecule is cleaved by ATG4B to form the cytosolic form, GABARAPL3-I. This is activated by APG7L/ATG7, transferred to ATG3 and conjugated to phospholipid to form the membrane-bound form, GABARAPL3-II. ATG4B also mediates the delipidation required for GABARAPL1 recycling when autophagosomes fuse with lysosomes. Ubiquitous. Expressed at very high levels in the brain, heart, peripheral blood leukocytes, liver, kidney, placenta and skeletal muscle. Expressed at very low levels in thymus and small intestine.

It localises to the cytoplasm. It is found in the cytoskeleton. The protein localises to the cytoplasmic vesicle. Its subcellular location is the autophagosome membrane. Its function is as follows. Ubiquitin-like modifier involved in autophagosome formation. Whereas LC3s are involved in elongation of the phagophore membrane, the GABARAP/GATE-16 subfamily is essential for a later stage in autophagosome maturation. The protein is Gamma-aminobutyric acid receptor-associated protein-like 3 (GABARAPL3) of Homo sapiens (Human).